Consider the following 727-residue polypeptide: Glycerol-3-phosphate dehydrogenase, mitochondrial (727 aa).

The N-terminal 42 residues, 1-42 (MAFQKAVKGTILVGGGALATVLGLSQFAHYRRKQMNLAYVKA), are a transit peptide targeting the mitochondrion. 71–99 (DILVIGGGATGSGCALDAVTRGLKTALVE) is a binding site for FAD. Tyr601 bears the Phosphotyrosine mark. 2 consecutive EF-hand domains span residues 623-658 (SDID…INVQ) and 659-694 (MDEN…IQKG). Positions 672, 674, 676, 678, and 683 each coordinate Ca(2+).

Belongs to the FAD-dependent glycerol-3-phosphate dehydrogenase family. The cofactor is FAD.

The protein localises to the mitochondrion. It carries out the reaction a quinone + sn-glycerol 3-phosphate = dihydroxyacetone phosphate + a quinol. Its pathway is polyol metabolism; glycerol degradation via glycerol kinase pathway; glycerone phosphate from sn-glycerol 3-phosphate (aerobic route): step 1/1. Its activity is regulated as follows. Calcium-binding enhance the activity of the enzyme. Calcium-responsive mitochondrial glycerol-3-phosphate dehydrogenase which seems to be a key component of the pancreatic beta-cell glucose-sensing device. In Macaca fascicularis (Crab-eating macaque), this protein is Glycerol-3-phosphate dehydrogenase, mitochondrial (GPD2).